We begin with the raw amino-acid sequence, 363 residues long: MAVTITLKTLQQQTFKIRMEPDETVKVLKEKIEAEKGRDAFPVAGQKLIYAGKILSDDVPIRDYRIDEKNFVVVMVTKTKAGQGTSAPPEASPTAAPESSTSFPPAPTSGMSHPPPAAREDKSPSEESAPTTSPESVSGSVPSSGSSGREEDAASTLVTGSEYETMLTEIMSMGYERERVVAALRASYNNPHRAVEYLLTGIPGSPEPEHGSVQESQVSEQPATEAAGENPLEFLRDQPQFQNMRQVIQQNPALLPALLQQLGQENPQLLQQISRHQEQFIQMLNEPPGELADISDVEGEVGAIGEEAPQMNYIQVTPQEKEAIERLKALGFPESLVIQAYFACEKNENLAANFLLSQNFDDE.

The region spanning 1 to 81 (MAVTITLKTL…VVVMVTKTKA (81 aa)) is the Ubiquitin-like domain. The disordered stretch occupies residues 81–160 (AGQGTSAPPE…EDAASTLVTG (80 aa)). Residues 85–103 (TSAPPEASPTAAPESSTSF) show a composition bias toward low complexity. K122 is covalently cross-linked (Glycyl lysine isopeptide (Lys-Gly) (interchain with G-Cter in ubiquitin)). Residues S123, S128, S133, S136, and S138 each carry the phosphoserine modification. A compositionally biased stretch (low complexity) spans 126–147 (EESAPTTSPESVSGSVPSSGSS). A UBA 1 domain is found at 161 to 201 (SEYETMLTEIMSMGYERERVVAALRASYNNPHRAVEYLLTG). Residues 203-227 (PGSPEPEHGSVQESQVSEQPATEAA) form a disordered region. S205 carries the phosphoserine modification. Over residues 213–222 (VQESQVSEQP) the composition is skewed to polar residues. Phosphoserine occurs at positions 295 and 357. The region spanning 318-358 (PQEKEAIERLKALGFPESLVIQAYFACEKNENLAANFLLSQ) is the UBA 2 domain. The HIV-1 vpr binding stretch occupies residues 319–363 (QEKEAIERLKALGFPESLVIQAYFACEKNENLAANFLLSQNFDDE).

Belongs to the RAD23 family. As to quaternary structure, interacts with XPC; the interaction is suggesting the existence of a functional equivalent variant XPC complex. Interacts with PSMD4 and PSMC5. Interacts with ATXN3. Interacts with UBQLN2. (Microbial infection) Interacts with HIV-1 Vpr.

It is found in the nucleus. Multiubiquitin chain receptor involved in modulation of proteasomal degradation. Binds to 'Lys-48'-linked polyubiquitin chains in a length-dependent manner and with a lower affinity to 'Lys-63'-linked polyubiquitin chains. Proposed to be capable to bind simultaneously to the 26S proteasome and to polyubiquitinated substrates and to deliver ubiquitinated proteins to the proteasome. Its function is as follows. Involved in nucleotide excision repair and is thought to be functional equivalent for RAD23B in global genome nucleotide excision repair (GG-NER) by association with XPC. In vitro, the XPC:RAD23A dimer has NER activity. Can stabilize XPC. Functionally, (Microbial infection) Involved in Vpr-dependent replication of HIV-1 in non-proliferating cells and primary macrophages. Required for the association of HIV-1 Vpr with the host proteasome. The sequence is that of UV excision repair protein RAD23 homolog A (RAD23A) from Homo sapiens (Human).